The sequence spans 437 residues: GTPase Obg (437 aa).

The Obg domain occupies 2–160 (SMFLDTAKIS…RQLELELKIL (159 aa)). The 178-residue stretch at 161 to 338 (ADVGLVGFPS…LLEATAELLA (178 aa)) folds into the OBG-type G domain. GTP contacts are provided by residues 167-174 (GFPSVGKS), 192-196 (FTTIV), 214-217 (DLPG), 284-287 (NKMD), and 319-321 (SSL). Residues serine 174 and threonine 194 each contribute to the Mg(2+) site. The region spanning 359-437 (GFAETEKDFE…IGKFEFEFVD (79 aa)) is the OCT domain.

It belongs to the TRAFAC class OBG-HflX-like GTPase superfamily. OBG GTPase family. In terms of assembly, monomer. Mg(2+) is required as a cofactor.

The protein resides in the cytoplasm. In terms of biological role, an essential GTPase which binds GTP, GDP and possibly (p)ppGpp with moderate affinity, with high nucleotide exchange rates and a fairly low GTP hydrolysis rate. Plays a role in control of the cell cycle, stress response, ribosome biogenesis and in those bacteria that undergo differentiation, in morphogenesis control. In Streptococcus pyogenes serotype M5 (strain Manfredo), this protein is GTPase Obg.